A 221-amino-acid polypeptide reads, in one-letter code: Eukaryotic translation initiation factor 4E-2 (221 aa).

Over residues 1 to 20 (MADELNKAALEEYKSSSVED) the composition is skewed to basic and acidic residues. A disordered region spans residues 1–36 (MADELNKAALEEYKSSSVEDRGEEGEIVGESDDTAS). The span at 21-33 (RGEEGEIVGESDD) shows a compositional bias: acidic residues. EIF4G-binding regions lie at residues 46–49 (HPLE) and 56–92 (FDNPSGKSKQAAWGSSIRPIYTFSTAEDFWSVYNNIH). MRNA is bound by residues 64–69 (KQAAWG), Lys96, and 114–115 (WE). The cysteines at positions 119 and 157 are disulfide-linked. Residues 140–149 (YTLLALIGEQ) form an EIF4G-binding region. MRNA-binding positions include 164-169 (RVRQEK) and 209-213 (KKLDR).

This sequence belongs to the eukaryotic initiation factor 4E family. As to quaternary structure, EIF4F is a multi-subunit complex, the composition of which varies with external and internal environmental conditions. It is composed of at least EIF4A, EIF4E and EIF4G. EIF4E is also known to interact with other partners. In higher plants two isoforms of EIF4F have been identified, named isoform EIF4F and isoform EIF(iso)4F. Isoform EIF4F has subunits p220 and p26, whereas isoform EIF(iso)4F has subunits p82 and p28. (Microbial infection) Interacts with potyvirus viral genome-linked protein (VPg) in the nucleus; mostly potato virus Y (PVY-LYE84) and tobacco etch virus (TEV-HAT) VPg, but not with PVY-LYE90 and pepper mottle virus (PepMoV) VPg; these interactions are possible in susceptible hosts but impaired in resistant plants. According to the redox status, the Cys-119-Cys-157 disulfide bridge may have a role in regulating protein function by affecting its ability to bind capped mRNA.

The protein resides in the nucleus. It localises to the cytoplasm. Component of the protein complex eIF4F, which is involved in the recognition of the mRNA cap, ATP-dependent unwinding of 5'-terminal secondary structure and recruitment of mRNA to the ribosome. Recognizes and binds the 7-methylguanosine-containing mRNA cap during an early step in the initiation of protein synthesis and facilitates ribosome binding by inducing the unwinding of the mRNAs secondary structures. Key component of recessive resistance to potyviruses. Its function is as follows. (Microbial infection) Susceptibility host factor required for viral infection (e.g. potato virus Y (PVY) and tobacco etch virus (TEV)) by recruiting viral RNAs to the host ribosomal complex via an interaction with viral genome-linked protein (VPg). This Solanum lycopersicum (Tomato) protein is Eukaryotic translation initiation factor 4E-2.